We begin with the raw amino-acid sequence, 145 residues long: 3-hydroxyacyl-[acyl-carrier-protein] dehydratase FabZ (145 aa).

His49 is a catalytic residue.

The protein belongs to the thioester dehydratase family. FabZ subfamily.

Its subcellular location is the cytoplasm. It catalyses the reaction a (3R)-hydroxyacyl-[ACP] = a (2E)-enoyl-[ACP] + H2O. Involved in unsaturated fatty acids biosynthesis. Catalyzes the dehydration of short chain beta-hydroxyacyl-ACPs and long chain saturated and unsaturated beta-hydroxyacyl-ACPs. This is 3-hydroxyacyl-[acyl-carrier-protein] dehydratase FabZ from Rickettsia akari (strain Hartford).